Consider the following 266-residue polypeptide: Transmembrane protein 192 (266 aa).

Over 1–46 (MAAAGRLEDSSLDILQSMDDDPLLDTQPLPHHSLQAQFRPRFHPLP) the chain is Cytoplasmic. Ser-17 carries the phosphoserine modification. A helical membrane pass occupies residues 47–67 (TVIIANLLLLIHVVFVVLAFL). Over 68 to 89 (TGVPCLYPNPTEDKCPENYTSP) the chain is Lumenal. Residues 90-110 (LKVQTAIILGKLILWILHLLF) traverse the membrane as a helical segment. At 111–137 (ERYVQYHHRKVRSRGYSQIYRSTRHLK) the chain is on the cytoplasmic side. A helical transmembrane segment spans residues 138-158 (TLALTIHSSGNTALLLLLCVQ). Residues 159 to 171 (HSFPEPSKLYLEL) lie on the Lumenal side of the membrane. A helical membrane pass occupies residues 172–192 (ILAVLALELICSLSCLILYIV). Residues 193 to 266 (KIRRFNRAKP…LELATQPART (74 aa)) lie on the Cytoplasmic side of the membrane. The residue at position 213 (Tyr-213) is a Phosphotyrosine. Phosphoserine is present on residues Ser-229 and Ser-230.

Belongs to the TMEM192 family. As to quaternary structure, homodimer.

The protein localises to the lysosome membrane. It localises to the late endosome. In Mus musculus (Mouse), this protein is Transmembrane protein 192 (Tmem192).